The sequence spans 721 residues: ATP-dependent zinc metalloprotease FtsH (721 aa).

Topologically, residues M1–R44 are cytoplasmic. A helical membrane pass occupies residues I45–F65. The Extracellular portion of the chain corresponds to S66–P190. The helical transmembrane segment at Q191–L211 threads the bilayer. The Cytoplasmic segment spans residues R212–N721. G279–T286 provides a ligand contact to ATP. H498 is a Zn(2+) binding site. Residue E499 is part of the active site. Zn(2+) contacts are provided by H502 and D577. The interval N686–N721 is disordered. Over residues E700–N721 the composition is skewed to basic and acidic residues.

The protein in the central section; belongs to the AAA ATPase family. It in the C-terminal section; belongs to the peptidase M41 family. As to quaternary structure, homohexamer. Zn(2+) serves as cofactor.

It localises to the cell membrane. In terms of biological role, acts as a processive, ATP-dependent zinc metallopeptidase for both cytoplasmic and membrane proteins. Plays a role in the quality control of integral membrane proteins. In Ureaplasma parvum serovar 3 (strain ATCC 27815 / 27 / NCTC 11736), this protein is ATP-dependent zinc metalloprotease FtsH.